The following is a 226-amino-acid chain: ATP-dependent Clp protease proteolytic subunit 2 (226 aa).

The Nucleophile role is filled by S118. H143 is an active-site residue.

The protein belongs to the peptidase S14 family. In terms of assembly, fourteen ClpP subunits assemble into 2 heptameric rings which stack back to back to give a disk-like structure with a central cavity, resembling the structure of eukaryotic proteasomes.

Its subcellular location is the cytoplasm. The enzyme catalyses Hydrolysis of proteins to small peptides in the presence of ATP and magnesium. alpha-casein is the usual test substrate. In the absence of ATP, only oligopeptides shorter than five residues are hydrolyzed (such as succinyl-Leu-Tyr-|-NHMec, and Leu-Tyr-Leu-|-Tyr-Trp, in which cleavage of the -Tyr-|-Leu- and -Tyr-|-Trp bonds also occurs).. Functionally, cleaves peptides in various proteins in a process that requires ATP hydrolysis. Has a chymotrypsin-like activity. Plays a major role in the degradation of misfolded proteins. The polypeptide is ATP-dependent Clp protease proteolytic subunit 2 (Synechocystis sp. (strain ATCC 27184 / PCC 6803 / Kazusa)).